We begin with the raw amino-acid sequence, 294 residues long: Cell division protein ZipA (294 aa).

Position 1 (Met-1) is a topological domain, periplasmic. Residues 2-22 form a helical membrane-spanning segment; it reads EIGLREWLILIGIIVIAGILF. The Cytoplasmic segment spans residues 23–294; sequence DGWRRMRGGK…FERRALTQKR (272 aa). The interval 47-107 is disordered; that stretch reads PDEEGSAEVL…GKRAAEMQPQ (61 aa). Over residues 82–91 the composition is skewed to basic and acidic residues; sequence AREREREQKP.

The protein belongs to the ZipA family. Interacts with FtsZ via their C-terminal domains.

It localises to the cell inner membrane. Its function is as follows. Essential cell division protein that stabilizes the FtsZ protofilaments by cross-linking them and that serves as a cytoplasmic membrane anchor for the Z ring. Also required for the recruitment to the septal ring of downstream cell division proteins. The protein is Cell division protein ZipA of Pseudomonas putida (strain W619).